The primary structure comprises 1152 residues: MKLKKQVTVCGAAIFCVAVFSLYLMLDRVQHDPARHQNGGNFPRSQISVLQNRIEQLEQLLEENHDIISRIKDSVLELTANAEGPPALLPYHTANGSWAVLPEPRPSFFSVSPQDCQFALGGRGQKPELQMLTVSEDLPFDNVEGGVWRQGFDISYSPNDWDTEDLQVFVVPHSHNDPGWIKTFDKYYTEQTQHILNSMVSKLQEDPRRRFLWAEVSFFAKWWDNISAQKRAAVRRLVGNGQLEIATGGWVMPDEANSHYFALVDQLIEGHQWLERNLGATPRSGWAVDPFGHSSTMPYLLRRANLTSMLIQRVHYAIKKHFAATHSLEFMWRQMWDSDSSTDIFCHMMPFYSYDVPHTCGPDPKICCQFDFKRLPGGRINCPWKVPPRAITEANVADRAALLLDQYRKKSRLFRSNVLLVPLGDDFRYDKPQEWDAQFFNYQRLFDFLNSKPEFHVQAQFGTLSEYFDALYKRTGVEPGARPPGFPVLSGDFFSYADREDHYWTGYYTSRPFYKSLDRVLEAHLRGAEILYSLALAHARRSGLAGQYPLSDFALLTEARRTLGLFQHHDAITGTAKEAVVVDYGVRLLRSLVSLKQVIINAAHYLVLGDQETYSFDPGTPFLQMDDSRVSHDALPERTVIRLDSSPRFVVVFNPLEQERLSVVSLLVNSPRVRVLSEEGQPLSVQISVHWSSATDMVPDVYQVSVPVRLPGLGLGVLQLQPDLDGPYTLQSSVRVYLNGVKLSVSRQSAFPVRVVDSGASDFAISNRYMQVWFSGLTGLLKSIRRVDEEQEQQMELEFLVYGTRTSKDKSGAYLFLPDSEAKPYVPKKPPVLRVTEGPFFSEVAVYYEHFHQVIRLYNLPGVEGLSLDMSFQVDIRDYVNKELALRIHTDIDSQGTFFTDLNGFQIQPRQYLKKLPLQANFYPMPVMAYIQDSQRRLTLHTAQALGVSSLGNGQLEVILDRRLMQDDNRGLGQGLKDNKITCNRFRLLLERRTTMSPEVHQEQERSTSYPSLLSHLTSMYLSTPPLVLPVAKRQGTSPALRSFHPLASPLPCDFHLLNLRMLPAEDTLPATDSALILHRKGFDCGLEAKNLGFNCTTSQGKLALGSLFHGLDVTFLQPTSLTLLYPLASPSNSTDISLEPMEISTFRLRLG.

At 1–5 (MKLKK) the chain is on the cytoplasmic side. The chain crosses the membrane as a helical; Signal-anchor for type II membrane protein span at residues 6 to 26 (QVTVCGAAIFCVAVFSLYLML). Over 27 to 796 (DRVQHDPARH…VDEEQEQQME (770 aa)) the chain is Lumenal. Positions 43-74 (PRSQISVLQNRIEQLEQLLEENHDIISRIKDS) form a coiled coil. The Zn(2+) site is built by H175 and D177. N225 carries N-linked (GlcNAc...) asparagine glycosylation. D289 serves as a coordination point for Zn(2+). D289 (nucleophile) is an active-site residue. N-linked (GlcNAc...) asparagine glycosylation is present at N305. Position 569 (H569) interacts with Zn(2+).

This sequence belongs to the glycosyl hydrolase 38 family. In terms of assembly, homodimer; disulfide-linked. Interacts with MGAT4D. Zn(2+) serves as cofactor.

The protein resides in the golgi apparatus membrane. It catalyses the reaction N(4)-{beta-D-GlcNAc-(1-&gt;2)-alpha-D-Man-(1-&gt;3)-[alpha-D-Man-(1-&gt;3)-[alpha-D-Man-(1-&gt;6)]-alpha-D-Man-(1-&gt;6)]-beta-D-Man-(1-&gt;4)-beta-D-GlcNAc-(1-&gt;4)-beta-D-GlcNAc}-L-asparaginyl-[protein] + 2 H2O = 2 alpha-D-mannopyranose + an N(4)-{beta-D-GlcNAc-(1-&gt;2)-alpha-D-Man-(1-&gt;3)-[alpha-D-Man-(1-&gt;6)]-beta-D-Man-(1-&gt;4)-beta-D-GlcNAc-(1-&gt;4)-beta-D-GlcNAc}-L-asparaginyl-[protein]. It functions in the pathway protein modification; protein glycosylation. Its function is as follows. Catalyzes the first committed step in the biosynthesis of complex N-glycans. It controls conversion of high mannose to complex N-glycans; the final hydrolytic step in the N-glycan maturation pathway. In Mus musculus (Mouse), this protein is Alpha-mannosidase 2x (Man2a2).